The primary structure comprises 416 residues: N-acetyl-L-cysteine deacetylase (416 aa).

Zn(2+) is bound by residues Cys128, His130, Glu164, His188, and His380.

This sequence belongs to the peptidase M20 family. The cofactor is Zn(2+). Co(2+) is required as a cofactor.

It catalyses the reaction N-acetyl-L-cysteine + H2O = L-cysteine + acetate. Its pathway is amino-acid metabolism. In terms of biological role, involved in a cysteine salvage pathway from S-alkylcysteine. Catalyzes the last step in this pathway, i.e. the deacetylation of N-acetyl-L-cysteine. This pathway is likely important in the catabolism of alkylated cysteine generated by proteolysis of alkylated glutathione formed in the detoxification of a wide range of electrophiles. In Bacillus subtilis (strain 168), this protein is N-acetyl-L-cysteine deacetylase.